The chain runs to 403 residues: L-cysteine:1D-myo-inositol 2-amino-2-deoxy-alpha-D-glucopyranoside ligase (403 aa).

Cys-43 is a binding site for Zn(2+). Residues 43–46, Thr-58, 81–83, and Trp-223 contribute to the L-cysteinyl-5'-AMP site; these read CGIT and NVT. The short motif at 45–55 is the 'HIGH' region element; it reads ITPYDATHLGH. Cys-227 is a Zn(2+) binding site. 245 to 247 lines the L-cysteinyl-5'-AMP pocket; it reads GAD. His-252 provides a ligand contact to Zn(2+). Val-278 lines the L-cysteinyl-5'-AMP pocket. The short motif at 284 to 288 is the 'KMSKS' region element; it reads KMSKS.

It belongs to the class-I aminoacyl-tRNA synthetase family. MshC subfamily. In terms of assembly, monomer. Requires Zn(2+) as cofactor.

The enzyme catalyses 1D-myo-inositol 2-amino-2-deoxy-alpha-D-glucopyranoside + L-cysteine + ATP = 1D-myo-inositol 2-(L-cysteinylamino)-2-deoxy-alpha-D-glucopyranoside + AMP + diphosphate + H(+). In terms of biological role, catalyzes the ATP-dependent condensation of GlcN-Ins and L-cysteine to form L-Cys-GlcN-Ins. The polypeptide is L-cysteine:1D-myo-inositol 2-amino-2-deoxy-alpha-D-glucopyranoside ligase (Acidothermus cellulolyticus (strain ATCC 43068 / DSM 8971 / 11B)).